The primary structure comprises 1059 residues: MPVSMAVCETANVVNAALRESLGVGNGSRAADEAKKTGGGGGDDSDSEMHNQIAVSAYAKRILMSKIEYEEVPNYHDSVLEQLKNKYIVIKQPSNNNNSSSCNGSNFGNSKVVGANGHDNGNNGHRKLTQSESTQSGPSPNELPKPKRVLYPRENIRIGWKQSERKWQVGTGMINVGNTCYLNSTLQALFHIPALANWLVSEQTHLENCNITESNGGCIICAMAKTLQSTQSCQSAMRPFHIYSKLKQICKHMVVGRQEDAHEFLRFLVEAMEKAYLMRFRNFKELDQLVKETTPLNQIFGGYLRSEVRCLSCSHVSITFQHFQDLLLDIRKSDTLEEAFDGYFSRERLEDMGYKCEGCKKKVSATKQFSLERAPITLCIQLKRFSMIGNKLTKTISFKPRIDLSRFAARSPAAAAQPLTYRLVSMVTHLGVSQHCGHYTAIGMTESGSYYNFDDSYVRPIAMQSVCNTNAYIMFYELDLSQTTPLKSNGLRLTNGHSQVAVPATVSSSSPTHTRFIGPQLPPGGINGYSNGHATGSSNAQKTAIQFKQQQQHPQQNGLQVGTGKFQEPPHAKSPLAGAYNKGEAFPATTANGNKSSSSSASNSNHNKSVNQLQHQQHYLPISSEDEDSEDGATATATATATARPTAQLPSMPKMTEDSSDKPKTPLKSSVKTNLVKSLLKTPLKSLVPYESASEEDEPLPNPRKRRSDSDSNDSGDSDPQPGHVNGHTKTNGGSLTNGNGLGKAKTILATSSSSSLASASASAASDDEDADEEEENSKLTNGWQPQKQSQSLTQSKAPPSPKTPPSPAVIKSKTGIWKVTRNDDNEDEDDDDDEDEEEQHQVVSTPSKNPRNPFAKSSTTPGAKRQKLLNGIAVKSQQQPRVGNGYQSEASTNGNVVNELLKQTHRGYGSASVLSWSGKPAELEKELVAEAREQRQHDHDDEEENEMDRGRQRKVKSATAKAYNSSTPGYNPFQEYESQKRWHKSSNGGGSFPRYHNQNFRQNFQQRNKFKYNRFGGPGGAKFQQQRALQRHLASGGVFNRRQPTGQQQQQQSQQSSS.

2 disordered regions span residues 24 to 49 and 94 to 148; these read VGNG…DSEM and SNNN…KPKR. The segment covering 94-123 has biased composition (low complexity); sequence SNNNNSSSCNGSNFGNSKVVGANGHDNGNN. Residues 130–139 are compositionally biased toward polar residues; it reads QSESTQSGPS. The region spanning 171 to 479 is the USP domain; that stretch reads TGMINVGNTC…NAYIMFYELD (309 aa). Cysteine 180 functions as the Nucleophile in the catalytic mechanism. Histidine 438 acts as the Proton acceptor in catalysis. Residues 505 to 673 are disordered; the sequence is TVSSSSPTHT…KTPLKSSVKT (169 aa). Residues serine 508 and serine 510 each carry the phosphoserine modification. A compositionally biased stretch (polar residues) spans 528–539; it reads GYSNGHATGSSN. Composition is skewed to low complexity over residues 540–560, 592–611, and 633–647; these read AQKT…NGLQ, NGNK…KSVN, and ATAT…RPTA. The segment covering 655-664 has biased composition (basic and acidic residues); sequence MTEDSSDKPK. Threonine 673 and threonine 682 each carry phosphothreonine. Disordered regions lie at residues 687–893, 926–998, and 1012–1059; these read LVPY…EAST, KELV…RYHN, and KYNR…QSSS. Serine 692 and serine 694 each carry phosphoserine. Low complexity-rich tracts occupy residues 729–739 and 752–765; these read TKTNGGSLTNG and SSSS…ASAA. Serine 766 is modified (phosphoserine). A compositionally biased stretch (acidic residues) spans 766 to 776; it reads SDDEDADEEEE. A compositionally biased stretch (polar residues) spans 779–795; sequence KLTNGWQPQKQSQSLTQ. Residues 799–808 are compositionally biased toward pro residues; it reads PPSPKTPPSP. Serine 801 carries the phosphoserine modification. Residue threonine 804 is modified to Phosphothreonine. A Phosphoserine modification is found at serine 807. Over residues 825–839 the composition is skewed to acidic residues; that stretch reads DNEDEDDDDDEDEEE. Polar residues-rich tracts occupy residues 842 to 862 and 876 to 893; these read QVVS…STTP and KSQQ…EAST. Phosphothreonine occurs at positions 846 and 861. Basic and acidic residues predominate over residues 926-940; sequence KELVAEAREQRQHDH. Residues 1048 to 1059 are compositionally biased toward low complexity; it reads QQQQQQSQQSSS.

The protein belongs to the peptidase C19 family. As to quaternary structure, interacts with atms/PAF1, but not with CycT.

It localises to the nucleus. Its subcellular location is the nucleolus. The enzyme catalyses Thiol-dependent hydrolysis of ester, thioester, amide, peptide and isopeptide bonds formed by the C-terminal Gly of ubiquitin (a 76-residue protein attached to proteins as an intracellular targeting signal).. Its function is as follows. Required for maintaining multiple types of adult stem cells, including male and female germline, epithelial follicle cell and intestinal stem cells. May function as a transcriptional repressor by continually deubiquiting histone H2B at the promoters of genes critical for cellular differentiation, thereby preventing histone H3 'Lys-4' trimethylation (H3K4). Controls selective autophagy activation by ubiquitinated proteins. The protein is Ubiquitin carboxyl-terminal hydrolase 36 (Usp36) of Drosophila pseudoobscura pseudoobscura (Fruit fly).